The primary structure comprises 1320 residues: Poly [ADP-ribose] polymerase tankyrase-1 (1320 aa).

The segment covering methionine 1–glutamine 15 has biased composition (basic residues). 2 disordered regions span residues methionine 1–valine 88 and alanine 111–valine 152. The segment covering serine 25–alanine 46 has biased composition (pro residues). Residues aspartate 69–aspartate 82 are compositionally biased toward basic and acidic residues. The segment covering asparagine 120–valine 152 has biased composition (low complexity). ANK repeat units lie at residues glycine 174–alanine 202, arginine 208–alanine 237, glycine 241–alanine 270, tryptophan 274–isoleucine 303, arginine 361–alanine 390, glycine 394–alanine 423, tryptophan 427–leucine 456, serine 514–glutamate 546, aspartate 550–alanine 579, leucine 583–isoleucine 612, arginine 676–alanine 705, glycine 709–valine 738, tryptophan 742–lysine 771, aspartate 775–alanine 803, arginine 829–alanine 858, glycine 862–alanine 891, tryptophan 895–methionine 924, and glutamate 928–cysteine 957. Positions glycine 1019 to glycine 1082 constitute an SAM domain. One can recognise a PARP catalytic domain in the interval alanine 1105–serine 1310. Residues cysteine 1227, histidine 1230, cysteine 1235, and cysteine 1238 each coordinate Zn(2+).

It belongs to the ARTD/PARP family. As to quaternary structure, oligomerizes and associates with TNKS2. Interacts with the cytoplasmic domain of LNPEP/Otase in SLC2A4/GLUT4-vesicles. Binds to the N-terminus of telomeric TERF1 via the ANK repeats. Found in a complex with POT1; TERF1 and TINF2. Interacts with AXIN1. Interacts with AXIN2. Interacts with BLZF1 and CASC3. Interacts with NUMA1. Phosphorylated on serine residues by MAPK kinases upon insulin stimulation. Phosphorylated during mitosis. Post-translationally, ubiquitinated by RNF146 when auto-poly-ADP-ribosylated, leading to its degradation. In terms of processing, ADP-ribosylated (-auto). Poly-ADP-ribosylated protein is recognized by RNF146, followed by ubiquitination.

It is found in the cytoplasm. It localises to the golgi apparatus membrane. Its subcellular location is the cytoskeleton. The protein localises to the microtubule organizing center. The protein resides in the centrosome. It is found in the nucleus. It localises to the nuclear pore complex. Its subcellular location is the chromosome. The protein localises to the telomere. The protein resides in the spindle pole. The catalysed reaction is NAD(+) + (ADP-D-ribosyl)n-acceptor = nicotinamide + (ADP-D-ribosyl)n+1-acceptor + H(+).. The enzyme catalyses L-aspartyl-[protein] + NAD(+) = 4-O-(ADP-D-ribosyl)-L-aspartyl-[protein] + nicotinamide. It carries out the reaction L-glutamyl-[protein] + NAD(+) = 5-O-(ADP-D-ribosyl)-L-glutamyl-[protein] + nicotinamide. Functionally, poly-ADP-ribosyltransferase involved in various processes such as Wnt signaling pathway, telomere length and vesicle trafficking. Acts as an activator of the Wnt signaling pathway by mediating poly-ADP-ribosylation (PARsylation) of AXIN1 and AXIN2, 2 key components of the beta-catenin destruction complex: poly-ADP-ribosylated target proteins are recognized by RNF146, which mediates their ubiquitination and subsequent degradation. Also mediates PARsylation of BLZF1 and CASC3, followed by recruitment of RNF146 and subsequent ubiquitination. Mediates PARsylation of TERF1, thereby contributing to the regulation of telomere length. Involved in centrosome maturation during prometaphase by mediating PARsylation of HEPACAM2/MIKI. May also regulate vesicle trafficking and modulate the subcellular distribution of SLC2A4/GLUT4-vesicles. May be involved in spindle pole assembly through PARsylation of NUMA1. Stimulates 26S proteasome activity. The polypeptide is Poly [ADP-ribose] polymerase tankyrase-1 (Tnks) (Mus musculus (Mouse)).